Reading from the N-terminus, the 232-residue chain is Orotidine 5'-phosphate decarboxylase (232 aa).

Substrate contacts are provided by residues Asp-10, Lys-32, 59–68, Thr-119, Arg-180, Gln-189, Gly-209, and Arg-210; that span reads DLKFHDIPNT. Lys-61 acts as the Proton donor in catalysis.

This sequence belongs to the OMP decarboxylase family. Type 1 subfamily. Homodimer.

The catalysed reaction is orotidine 5'-phosphate + H(+) = UMP + CO2. Its pathway is pyrimidine metabolism; UMP biosynthesis via de novo pathway; UMP from orotate: step 2/2. Its function is as follows. Catalyzes the decarboxylation of orotidine 5'-monophosphate (OMP) to uridine 5'-monophosphate (UMP). The chain is Orotidine 5'-phosphate decarboxylase from Actinobacillus succinogenes (strain ATCC 55618 / DSM 22257 / CCUG 43843 / 130Z).